Here is a 201-residue protein sequence, read N- to C-terminus: Ciliary microtubule inner protein 2C (201 aa).

Belongs to the CIMIP2 family. In terms of assembly, microtubule inner protein component of sperm flagellar doublet microtubules. In terms of tissue distribution, expressed in airway epithelial cells.

The protein localises to the cytoplasm. It is found in the cytoskeleton. Its subcellular location is the cilium axoneme. The protein resides in the flagellum axoneme. In terms of biological role, microtubule inner protein (MIP) part of the dynein-decorated doublet microtubules (DMTs) in cilia axoneme, which is required for motile cilia beating. Binds to the intra-tubulin interfaces. This chain is Ciliary microtubule inner protein 2C, found in Homo sapiens (Human).